The following is a 322-amino-acid chain: 4-hydroxythreonine-4-phosphate dehydrogenase (322 aa).

Position 132 (threonine 132) interacts with substrate. A divalent metal cation-binding residues include histidine 160, histidine 205, and histidine 260. Substrate-binding residues include lysine 268, asparagine 277, and arginine 286.

It belongs to the PdxA family. Homodimer. Requires Zn(2+) as cofactor. Mg(2+) is required as a cofactor. It depends on Co(2+) as a cofactor.

Its subcellular location is the cytoplasm. The catalysed reaction is 4-(phosphooxy)-L-threonine + NAD(+) = 3-amino-2-oxopropyl phosphate + CO2 + NADH. It functions in the pathway cofactor biosynthesis; pyridoxine 5'-phosphate biosynthesis; pyridoxine 5'-phosphate from D-erythrose 4-phosphate: step 4/5. In terms of biological role, catalyzes the NAD(P)-dependent oxidation of 4-(phosphooxy)-L-threonine (HTP) into 2-amino-3-oxo-4-(phosphooxy)butyric acid which spontaneously decarboxylates to form 3-amino-2-oxopropyl phosphate (AHAP). The protein is 4-hydroxythreonine-4-phosphate dehydrogenase of Xanthomonas campestris pv. campestris (strain 8004).